Here is a 239-residue protein sequence, read N- to C-terminus: Ribosomal RNA small subunit methyltransferase G (239 aa).

S-adenosyl-L-methionine is bound by residues glycine 77, phenylalanine 82, 128–129 (AE), and arginine 147. The tract at residues 219-239 (KNTPKKYPRKPGTPNKSPIEG) is disordered.

This sequence belongs to the methyltransferase superfamily. RNA methyltransferase RsmG family.

The protein localises to the cytoplasm. Specifically methylates the N7 position of guanine in position 535 of 16S rRNA. This chain is Ribosomal RNA small subunit methyltransferase G, found in Bacillus subtilis (strain 168).